The primary structure comprises 505 residues: Maturase K (505 aa).

Belongs to the intron maturase 2 family. MatK subfamily.

Its subcellular location is the plastid. The protein resides in the chloroplast. In terms of biological role, usually encoded in the trnK tRNA gene intron. Probably assists in splicing its own and other chloroplast group II introns. The chain is Maturase K from Idiospermum australiense (Ribbonwood tree).